Here is a 293-residue protein sequence, read N- to C-terminus: G1/S-specific cyclin-D3 (293 aa).

A Cyclin N-terminal domain is found at 27-152; it reads VLQSLLRLEE…LVLGKLKWDL (126 aa). Positions 257–293 are disordered; the sequence is REAAQTAPSPVPKAPGGSSSQGPSQTSTPTDVTAIHL. Phosphoserine occurs at positions 265 and 280. The span at 271–286 shows a compositional bias: low complexity; the sequence is PGGSSSQGPSQTSTPT. Thr284 carries the phosphothreonine modification.

The protein belongs to the cyclin family. Cyclin D subfamily. As to quaternary structure, interacts with the CDK4 and CDK6 protein kinases to form a serine/threonine kinase holoenzyme complex. The cyclin subunit imparts substrate specificity to the complex. Interacts with ATF5. Interacts with EIF3K. Component of the ternary complex cyclin D/CDK4/CDKN1B required for nuclear translocation and modulation of CDK4-mediated kinase activity. Can form similar complexes with either CDKN1A or CDKN2A. Post-translationally, phosphorylation at Thr-284 by MAP kinases is required for ubiquitination and degradation by the DCX(AMBRA1) complex. In terms of processing, ubiquitinated by the DCX(AMBRA1) complex during the transition from G1 to S cell phase, leading to its degradation: ubiquitination is dependent on Thr-284 phosphorylation. The DCX(AMBRA1) complex represents the major regulator of CCND3 stability during the G1/S transition. Polyubiquitinated by the SCF(FBXL2) complex, leading to proteasomal degradation.

The protein localises to the nucleus. Its subcellular location is the cytoplasm. Its function is as follows. Regulatory component of the cyclin D3-CDK4 (DC) complex that phosphorylates and inhibits members of the retinoblastoma (RB) protein family including RB1 and regulates the cell-cycle during G(1)/S transition. Phosphorylation of RB1 allows dissociation of the transcription factor E2F from the RB/E2F complex and the subsequent transcription of E2F target genes which are responsible for the progression through the G(1) phase. Hypophosphorylates RB1 in early G(1) phase. Cyclin D-CDK4 complexes are major integrators of various mitogenenic and antimitogenic signals. Component of the ternary complex, cyclin D3/CDK4/CDKN1B, required for nuclear translocation and activity of the cyclin D-CDK4 complex. Shows transcriptional coactivator activity with ATF5 independently of CDK4. This chain is G1/S-specific cyclin-D3, found in Rattus norvegicus (Rat).